The primary structure comprises 131 residues: Large ribosomal subunit protein bL20 (131 aa).

It belongs to the bacterial ribosomal protein bL20 family.

Functionally, binds directly to 23S ribosomal RNA and is necessary for the in vitro assembly process of the 50S ribosomal subunit. It is not involved in the protein synthesizing functions of that subunit. This chain is Large ribosomal subunit protein bL20, found in Mycolicibacterium paratuberculosis (strain ATCC BAA-968 / K-10) (Mycobacterium paratuberculosis).